The primary structure comprises 276 residues: MGRSRSRSSSRSKHTKSSKHNKKNRSRSRSRSREKERARKRSKSRESKRNRRRESRSRSRSNTAPSSRRDRERERERASSPPDRIDIFGRTVSKRSSLDEKQKREEEEKKAEFERQRKIRQQEIEEKLIEEETARRVEELVAKRVEEELEKRKDEIEREVLRRVEEAKRIMEKQLLEELERQRQAELAAQKAREEEERAKREELERILEENNRKIAEAQAKLAEEQLKIVEEQRKIHEERMKLEQERQRQQKEEQKIILGKGKSRPKLSFSLKSQD.

2 stretches are compositionally biased toward basic residues: residues 1-30 (MGRS…RSRS) and 38-59 (ARKR…RSRS). A necessary and sufficient for RNA binding region spans residues 1-77 (MGRSRSRSSS…RRDRERERER (77 aa)). Residues 1–117 (MGRSRSRSSS…EKKAEFERQR (117 aa)) form a disordered region. Basic and acidic residues-rich tracts occupy residues 67–87 (SRRD…RIDI) and 96–117 (SSLD…ERQR). The interval 78–276 (ASSPPDRIDI…KLSFSLKSQD (199 aa)) is necessary and sufficient for transcriptional regulation. The short motif at 175–179 (LLEEL) is the LXXLL motif 1; degenerate element. Positions 204-208 (LERIL) match the LXXLL motif 2; degenerate motif. Residues 240 to 256 (RMKLEQERQRQQKEEQK) show a composition bias toward basic and acidic residues. The segment at 240-276 (RMKLEQERQRQQKEEQKIILGKGKSRPKLSFSLKSQD) is disordered.

The protein belongs to the ARGLU1 family.

The protein localises to the nucleus. It localises to the nucleus speckle. The protein resides in the chromosome. Its function is as follows. Dual function regulator of gene expression; regulator of transcription and modulator of alternative splicing. General coactivator of nuclear receptor-induced gene expression. This is Arginine and glutamate-rich protein 1 (ARGLU1) from Gallus gallus (Chicken).